Here is a 981-residue protein sequence, read N- to C-terminus: Translation initiation factor IF-2 (981 aa).

The interval 31 to 370 (FVKSASSTVE…SKRAKRAEYE (340 aa)) is disordered. A compositionally biased stretch (low complexity) spans 64–87 (GAAAPAARPAAKPGAPSPSAAKPG). A compositionally biased stretch (pro residues) spans 88 to 111 (GPRPGPKPAAPAPAAPAAPAPAAP). The segment covering 112-121 (AAPAAAAPAA) has biased composition (low complexity). Over residues 136–145 (PAQPARPAPA) the composition is skewed to pro residues. Residues 146–165 (APAASAPAAPAAPAAPSTGA) show a composition bias toward low complexity. A compositionally biased stretch (pro residues) spans 256 to 269 (RPSPGSMPPRPNPG). Low complexity predominate over residues 270–279 (AMPARSARPA). The segment covering 280–339 (PGGGGRPGRPGGAPGGRPGGGGGGYRGGGAPGAGAGAGAPGGAAPAGGFRGRPGGGGRPG) has biased composition (gly residues). The span at 356–365 (RRGRKSKRAK) shows a compositional bias: basic residues. Residues 477-649 (SRPPVVTVMG…VLLTADASLD (173 aa)) form the tr-type G domain. The G1 stretch occupies residues 486 to 493 (GHVDHGKT). GTP is bound at residue 486 to 493 (GHVDHGKT). The segment at 511–515 (GITQH) is G2. The tract at residues 536–539 (DTPG) is G3. GTP-binding positions include 536 to 540 (DTPGH) and 590 to 593 (NKID). Positions 590-593 (NKID) are G4. The G5 stretch occupies residues 626–628 (SAK).

Belongs to the TRAFAC class translation factor GTPase superfamily. Classic translation factor GTPase family. IF-2 subfamily.

It is found in the cytoplasm. One of the essential components for the initiation of protein synthesis. Protects formylmethionyl-tRNA from spontaneous hydrolysis and promotes its binding to the 30S ribosomal subunits. Also involved in the hydrolysis of GTP during the formation of the 70S ribosomal complex. This chain is Translation initiation factor IF-2, found in Rhodococcus erythropolis (strain PR4 / NBRC 100887).